Consider the following 459-residue polypeptide: 2-(3-amino-3-carboxypropyl)histidine synthase subunit 1 (459 aa).

Residues 1 to 68 (MEDDRAQVDL…AGANTSIEDS (68 aa)) are disordered. Residues 41–61 (SAAAGKSSSSSSNSTSQPAGA) are compositionally biased toward low complexity. Positions 165, 268, and 403 each coordinate [4Fe-4S] cluster.

Belongs to the DPH1/DPH2 family. DPH1 subfamily. In terms of assembly, component of the 2-(3-amino-3-carboxypropyl)histidine synthase complex composed of dph-1, dph-2, dph-3 and a NADH-dependent reductase, predominantly cbr-1. The cofactor is [4Fe-4S] cluster.

It localises to the cytoplasm. It carries out the reaction L-histidyl-[translation elongation factor 2] + S-adenosyl-L-methionine = 2-[(3S)-amino-3-carboxypropyl]-L-histidyl-[translation elongation factor 2] + S-methyl-5'-thioadenosine + H(+). The protein operates within protein modification; peptidyl-diphthamide biosynthesis. Its function is as follows. Catalyzes the first step of diphthamide biosynthesis, a post-translational modification of histidine which occurs in elongation factor 2. Dph-1 and dph-2 transfer a 3-amino-3-carboxypropyl (ACP) group from S-adenosyl-L-methionine (SAM) to a histidine residue, the reaction is assisted by a reduction system comprising dph-3 and a NADH-dependent reductase, predominantly cbr-1. The sequence is that of 2-(3-amino-3-carboxypropyl)histidine synthase subunit 1 (dph-1) from Neurospora crassa (strain ATCC 24698 / 74-OR23-1A / CBS 708.71 / DSM 1257 / FGSC 987).